Here is a 555-residue protein sequence, read N- to C-terminus: CTP synthase (555 aa).

The segment at 1 to 265 (MTRYIFITGG…GNRVCEKLNI (265 aa)) is amidoligase domain. Residue Ser-13 coordinates CTP. Ser-13 lines the UTP pocket. ATP contacts are provided by residues 14–19 (SLGKGI) and Asp-71. Mg(2+)-binding residues include Asp-71 and Glu-139. CTP contacts are provided by residues 146–148 (DIE), 186–191 (KTKPTQ), and Lys-222. UTP contacts are provided by residues 186-191 (KTKPTQ) and Lys-222. The 252-residue stretch at 290–541 (TVAVVGKYVD…IKAGLAAKEA (252 aa)) folds into the Glutamine amidotransferase type-1 domain. An L-glutamine-binding site is contributed by Gly-351. The Nucleophile; for glutamine hydrolysis role is filled by Cys-378. L-glutamine contacts are provided by residues 379–382 (LGMQ), Glu-402, and Arg-469. Active-site residues include His-514 and Glu-516.

It belongs to the CTP synthase family. In terms of assembly, homotetramer.

The catalysed reaction is UTP + L-glutamine + ATP + H2O = CTP + L-glutamate + ADP + phosphate + 2 H(+). It carries out the reaction L-glutamine + H2O = L-glutamate + NH4(+). It catalyses the reaction UTP + NH4(+) + ATP = CTP + ADP + phosphate + 2 H(+). It functions in the pathway pyrimidine metabolism; CTP biosynthesis via de novo pathway; CTP from UDP: step 2/2. Allosterically activated by GTP, when glutamine is the substrate; GTP has no effect on the reaction when ammonia is the substrate. The allosteric effector GTP functions by stabilizing the protein conformation that binds the tetrahedral intermediate(s) formed during glutamine hydrolysis. Inhibited by the product CTP, via allosteric rather than competitive inhibition. Catalyzes the ATP-dependent amination of UTP to CTP with either L-glutamine or ammonia as the source of nitrogen. Regulates intracellular CTP levels through interactions with the four ribonucleotide triphosphates. The protein is CTP synthase of Coxiella burnetii (strain Dugway 5J108-111).